A 305-amino-acid polypeptide reads, in one-letter code: Glycine betaine-binding protein YehZ (305 aa).

An N-terminal signal peptide occupies residues 1 to 23; the sequence is MPLLKLWAGSLVMLAAVSLPLQA.

It belongs to the OsmX family. In terms of assembly, the complex is composed of two ATP-binding proteins (YehX), two transmembrane proteins (YehW and YehY) and a solute-binding protein (YehZ).

It is found in the periplasm. Functionally, part of an ABC transporter complex involved in low-affinity glycine betaine uptake. Binds glycine betaine with low affinity. The sequence is that of Glycine betaine-binding protein YehZ (yehZ) from Escherichia coli (strain K12).